Reading from the N-terminus, the 126-residue chain is Translation initiation factor 5A (126 aa).

Lysine 36 is modified (hypusine).

It belongs to the eIF-5A family.

The protein resides in the cytoplasm. Functions by promoting the formation of the first peptide bond. The polypeptide is Translation initiation factor 5A (Haloarcula marismortui (strain ATCC 43049 / DSM 3752 / JCM 8966 / VKM B-1809) (Halobacterium marismortui)).